Consider the following 144-residue polypeptide: Large ribosomal subunit protein uL15 (144 aa).

Residues 1 to 25 (MFLNTIGARDGSRPEKKRVGRGIGS) are disordered.

The protein belongs to the universal ribosomal protein uL15 family. In terms of assembly, part of the 50S ribosomal subunit.

Functionally, binds to the 23S rRNA. This is Large ribosomal subunit protein uL15 from Methylococcus capsulatus (strain ATCC 33009 / NCIMB 11132 / Bath).